The sequence spans 209 residues: Na(+)-translocating NADH-quinone reductase subunit D (209 aa).

Helical transmembrane passes span 42-62 (LVMTIAVTLVTAFSNFFISLI), 66-86 (IPGSVRIIVQMAIIASLVIVV), 103-123 (VFVGLIITNCIVMGRAEAYAM), 131-151 (FMDGIGNGLGYGVILILVGFL), and 178-198 (NGLFLLAPSAFFIIGLLIWGL).

This sequence belongs to the NqrDE/RnfAE family. In terms of assembly, composed of six subunits; NqrA, NqrB, NqrC, NqrD, NqrE and NqrF.

It localises to the cell inner membrane. It carries out the reaction a ubiquinone + n Na(+)(in) + NADH + H(+) = a ubiquinol + n Na(+)(out) + NAD(+). Functionally, NQR complex catalyzes the reduction of ubiquinone-1 to ubiquinol by two successive reactions, coupled with the transport of Na(+) ions from the cytoplasm to the periplasm. NqrA to NqrE are probably involved in the second step, the conversion of ubisemiquinone to ubiquinol. The protein is Na(+)-translocating NADH-quinone reductase subunit D of Proteus mirabilis (strain HI4320).